We begin with the raw amino-acid sequence, 142 residues long: Putative pre-16S rRNA nuclease (142 aa).

Belongs to the YqgF nuclease family.

It is found in the cytoplasm. Functionally, could be a nuclease involved in processing of the 5'-end of pre-16S rRNA. This is Putative pre-16S rRNA nuclease from Lactobacillus acidophilus (strain ATCC 700396 / NCK56 / N2 / NCFM).